We begin with the raw amino-acid sequence, 752 residues long: Photosystem I P700 chlorophyll a apoprotein A1 (752 aa).

8 consecutive transmembrane segments (helical) span residues 73-96 (IFSA…FHGA), 159-182 (LYVT…FHYH), 198-222 (LNHH…HVSA), 294-312 (IAHH…GHQY), 349-372 (WHAQ…HHMY), 388-414 (LCIF…IFMV), 436-458 (AIIS…LYIH), and 533-551 (FLIH…LILL). Residues Cys-575 and Cys-584 each coordinate [4Fe-4S] cluster. Helical transmembrane passes span 591 to 612 (HVFL…HFSW) and 666 to 688 (LSAY…MFLF). A chlorophyll a'-binding site is contributed by His-677. Met-685 and Tyr-693 together coordinate chlorophyll a. Residue Trp-694 coordinates phylloquinone. Residues 726–746 (AVGVAHYLLGGIATTWAFFHA) traverse the membrane as a helical segment.

It belongs to the PsaA/PsaB family. In terms of assembly, the PsaA/B heterodimer binds the P700 chlorophyll special pair and subsequent electron acceptors. PSI consists of a core antenna complex that captures photons, and an electron transfer chain that converts photonic excitation into a charge separation. The cyanobacterial PSI reaction center is composed of one copy each of PsaA,B,C,D,E,F,I,J,K,L,M and X, and forms trimeric complexes. PSI electron transfer chain: 5 chlorophyll a, 1 chlorophyll a', 2 phylloquinones and 3 4Fe-4S clusters. PSI core antenna: 90 chlorophyll a, 22 carotenoids, 3 phospholipids and 1 galactolipid. P700 is a chlorophyll a/chlorophyll a' dimer, A0 is one or more chlorophyll a, A1 is one or both phylloquinones and FX is a shared 4Fe-4S iron-sulfur center. is required as a cofactor.

Its subcellular location is the cellular thylakoid membrane. It carries out the reaction reduced [plastocyanin] + hnu + oxidized [2Fe-2S]-[ferredoxin] = oxidized [plastocyanin] + reduced [2Fe-2S]-[ferredoxin]. In terms of biological role, psaA and PsaB bind P700, the primary electron donor of photosystem I (PSI), as well as the electron acceptors A0, A1 and FX. PSI is a plastocyanin/cytochrome c6-ferredoxin oxidoreductase, converting photonic excitation into a charge separation, which transfers an electron from the donor P700 chlorophyll pair to the spectroscopically characterized acceptors A0, A1, FX, FA and FB in turn. Oxidized P700 is reduced on the lumenal side of the thylakoid membrane by plastocyanin or cytochrome c6. This is Photosystem I P700 chlorophyll a apoprotein A1 from Nostoc punctiforme (strain ATCC 29133 / PCC 73102).